A 761-amino-acid chain; its full sequence is Xaa-Pro dipeptidyl-peptidase (761 aa).

Active-site charge relay system residues include serine 347, aspartate 467, and histidine 497.

It belongs to the peptidase S15 family. In terms of assembly, homodimer.

The protein resides in the cytoplasm. It carries out the reaction Hydrolyzes Xaa-Pro-|- bonds to release unblocked, N-terminal dipeptides from substrates including Ala-Pro-|-p-nitroanilide and (sequentially) Tyr-Pro-|-Phe-Pro-|-Gly-Pro-|-Ile.. In terms of biological role, removes N-terminal dipeptides sequentially from polypeptides having unsubstituted N-termini provided that the penultimate residue is proline. This Streptococcus agalactiae serotype Ia (strain ATCC 27591 / A909 / CDC SS700) protein is Xaa-Pro dipeptidyl-peptidase.